The chain runs to 97 residues: Large ribosomal subunit protein bL27 (97 aa).

The propeptide occupies 1–12 (MIKLNLSNLQHF). Residues 13–38 (AHKKGGGSTSNGRDSQAKRLGAKAAD) are disordered.

This sequence belongs to the bacterial ribosomal protein bL27 family. Post-translationally, the N-terminus is cleaved by ribosomal processing cysteine protease Prp.

This is Large ribosomal subunit protein bL27 from Streptococcus equi subsp. equi (strain 4047).